A 520-amino-acid chain; its full sequence is MKTANHPDTVLIVDFGSQFTQLIARRIREAGVFSEIVPFQSAEAAFKRINPKAVILSGGPASTSDIGSPRAPQIVFDAGVPVLGICYGQMAMCVQMGGVAESSNHREFGRAFVEIEKDSPLFEGLWATGQRHQVWMSHGDRVIALPPGFQVFGKSESSPFAIFGNVERKMYGIMFHPEVVHTPDGARLLRNFVHNIAGIEGDWTMRAYREHAVEAIRKQVGKGKVICALSGGVDSSVAALLIHEAVGDQLTCILVDHGLMRKDEAAGVVAMFRQHYNLPLILVDASEKFISALEGEVDPEKKRKTIGRLFIEVFEEEAKKLGGADFLAQGTLYPDVIESVSFTGGPSVTIKSHHNVGGLPERMNMQLVEPLRELFKDEVRALGKELGLPESFIGRHPFPGPGLAIRCPGGITREKLEILREADAIYLDEIRKAGLYDAIWQAFAVLLPVQTVGVMGDGRTYEFVCALRAVTSVDGMTADFYHYDMAFLGAAATRIINEVRGINRVVYDVTSKPPGTIEWE.

The 194-residue stretch at 9–202 folds into the Glutamine amidotransferase type-1 domain; that stretch reads TVLIVDFGSQ…VHNIAGIEGD (194 aa). Cys86 functions as the Nucleophile in the catalytic mechanism. Catalysis depends on residues His176 and Glu178. In terms of domain architecture, GMPS ATP-PPase spans 203–395; sequence WTMRAYREHA…LGLPESFIGR (193 aa). Residue 230-236 participates in ATP binding; sequence SGGVDSS.

Homodimer.

The catalysed reaction is XMP + L-glutamine + ATP + H2O = GMP + L-glutamate + AMP + diphosphate + 2 H(+). The protein operates within purine metabolism; GMP biosynthesis; GMP from XMP (L-Gln route): step 1/1. Its function is as follows. Catalyzes the synthesis of GMP from XMP. The sequence is that of GMP synthase [glutamine-hydrolyzing] from Mesorhizobium japonicum (strain LMG 29417 / CECT 9101 / MAFF 303099) (Mesorhizobium loti (strain MAFF 303099)).